The following is a 363-amino-acid chain: Chorismate synthase (363 aa).

The interval 42 to 61 is disordered; that stretch reads QRDLDRRKPGTSRHTTQRQE. NADP(+)-binding residues include arginine 48 and arginine 54. Residues 125–127, 237–238, glycine 277, 292–296, and arginine 318 each bind FMN; these read RSS, NA, and KPTSS.

The protein belongs to the chorismate synthase family. Homotetramer. It depends on FMNH2 as a cofactor.

The enzyme catalyses 5-O-(1-carboxyvinyl)-3-phosphoshikimate = chorismate + phosphate. Its pathway is metabolic intermediate biosynthesis; chorismate biosynthesis; chorismate from D-erythrose 4-phosphate and phosphoenolpyruvate: step 7/7. Functionally, catalyzes the anti-1,4-elimination of the C-3 phosphate and the C-6 proR hydrogen from 5-enolpyruvylshikimate-3-phosphate (EPSP) to yield chorismate, which is the branch point compound that serves as the starting substrate for the three terminal pathways of aromatic amino acid biosynthesis. This reaction introduces a second double bond into the aromatic ring system. The sequence is that of Chorismate synthase from Pseudomonas aeruginosa (strain LESB58).